We begin with the raw amino-acid sequence, 62 residues long: ATP synthase subunit J, mitochondrial (62 aa).

A helical membrane pass occupies residues 13–32 (IVKPLWPYAVGGVITFFLFA).

F-type ATP synthases have 2 components, the catalytic core F(1) and the membrane-embedded component F(0), linked together by a central stalk and a peripheral stalk. The central stalk, also called rotor shaft, is often seen as part of F(1). The peripheral stalk is seen as part of F(0). F(0) contains the membrane channel next to the rotor. F-type ATP synthases form dimers but each monomer functions independently in ATP generation. The dimer consists of 17 different polypeptides: ATP1 (subunit alpha, 3 molecules per monomer, part of F(1)), ATP2 (subunit beta, 3 copies per monomer, part of F(1)), ATP3 (subunit gamma, part of the central stalk), ATP4 (subunit b, part of the peripheral stalk), ATP5/OSCP (subunit 5/OSCP, part of the peripheral stalk), ATP6 (subunit a, part of the peripheral stalk), ATP7 (subunit d, part of the peripheral stalk), ATP8 (subunit 8, part of the peripheral stalk), OLI1 (subunit c, part of the rotor, 10 molecules per monomer), ATP14 (subunit h, part of the peripheral stalk), ATP15 (subunit epsilon, part of the central stalk), ATP16 (subunit delta, part of the central stalk), ATP17 (subunit f, part of the peripheral stalk), ATP18 (subunit i/j, part of the peripheral stalk), ATP19 (subunit k, dimer-specific, at interface between monomers), ATP20 (subunit g, at interface between monomers), TIM11 (subunit e, at interface between monomers).

Its subcellular location is the mitochondrion inner membrane. In terms of biological role, mitochondrial membrane ATP synthase (F(1)F(0) ATP synthase or Complex V) produces ATP from ADP in the presence of a proton gradient across the membrane which is generated by electron transport complexes of the respiratory chain. F-type ATP synthases consist of two structural domains, F(1) - containing the extramembraneous catalytic core, and F(0) - containing the membrane proton channel, linked together by a central stalk and a peripheral stalk. During catalysis, ATP synthesis in the catalytic domain of F(1) is coupled via a rotary mechanism of the central stalk subunits to proton translocation. Part of the complex F(0) domain. Minor subunit located with subunit a/ATP6 in the membrane. The sequence is that of ATP synthase subunit J, mitochondrial from Yarrowia lipolytica (strain CLIB 122 / E 150) (Yeast).